Here is a 564-residue protein sequence, read N- to C-terminus: MFS-type transporter astH (564 aa).

N23 is a glycosylation site (N-linked (GlcNAc...) asparagine). The segment at 26–59 (KDTLVNCSPDPENPEKGQASSPRTQISVDDNEES) is disordered. The span at 43–53 (QASSPRTQISV) shows a compositional bias: polar residues. Transmembrane regions (helical) follow at residues 69–89 (LAMI…DTTI), 106–126 (DVGW…LSFG), 143–163 (GMFE…GLII), and 197–217 (GILG…GGAF). The N-linked (GlcNAc...) asparagine glycan is linked to N220. The next 6 membrane-spanning stretches (helical) occupy residues 225-245 (WCFY…ILFF), 266-286 (LLGS…LQWG), 297-317 (IIAL…VQWW), 339-359 (LFSF…PMWF), 375-395 (LPMV…VGAL), and 396-416 (GYYT…AGLL). N425 carries an N-linked (GlcNAc...) asparagine glycan. 2 helical membrane-spanning segments follow: residues 461 to 481 (TGTV…MSVG) and 537 to 557 (FYVA…MQWI).

It belongs to the major facilitator superfamily. TCR/Tet family.

It is found in the membrane. Functionally, MFS-type transporter; part of the gene cluster that mediates the biosynthesis of astellolides, drimane-type sesquiterpene esters that show antimicrobial, anti-inflammatory, and anti-tumor activities. Seems not to be involved in astellolides translocation. The chain is MFS-type transporter astH from Aspergillus oryzae (strain ATCC 42149 / RIB 40) (Yellow koji mold).